The primary structure comprises 216 residues: Type-4 uracil-DNA glycosylase (216 aa).

[4Fe-4S] cluster contacts are provided by cysteine 14 and cysteine 17. Residues 41–43 (GEA), phenylalanine 55, and asparagine 82 contribute to the uracil site. Residues cysteine 86 and cysteine 102 each contribute to the [4Fe-4S] cluster site. Histidine 164 is a uracil binding site.

This sequence belongs to the uracil-DNA glycosylase (UDG) superfamily. Type 4 (UDGa) family. As to quaternary structure, interacts with the sliding clamp PCNA3 subunit.

The enzyme catalyses Hydrolyzes single-stranded DNA or mismatched double-stranded DNA and polynucleotides, releasing free uracil.. Functionally, removes uracil bases that are present in DNA as a result of either deamination of cytosine or misincorporation of dUMP instead of dTMP. Can remove uracil from double-stranded DNA containing either a U/G or U/A base pair as well as from single-stranded DNA. This chain is Type-4 uracil-DNA glycosylase, found in Saccharolobus solfataricus (strain ATCC 35092 / DSM 1617 / JCM 11322 / P2) (Sulfolobus solfataricus).